The following is a 413-amino-acid chain: uncharacterized protein (413 aa).

7 consecutive transmembrane segments (helical) span residues 10-32 (GLTIHLSLFLLSLLYALNAGRLP), 162-184 (VFLHTGLIHVLVVSGLHVGLVFL), 189-211 (LLPRFYGEVLGLVGVLFYSAFLV), 232-254 (LSFRRYCSLCVLFFTGTLMLFFF), 259-276 (YSYSFWLSFFAVLYILLV), 288-310 (ALMVSLGAFTGTAPLIASFSFVT), and 325-347 (FAYALFGVLSLLTLFSFPPSLIL).

The protein localises to the cell membrane. This is an uncharacterized protein from Aquifex aeolicus (strain VF5).